The chain runs to 720 residues: Putative glutamine--fructose-6-phosphate aminotransferase [isomerizing] (720 aa).

Catalysis depends on Cys2, which acts as the Nucleophile; for GATase activity. In terms of domain architecture, Glutamine amidotransferase type-2 spans 2-321 (CGIFGYCNFL…DNDTAHIYDG (320 aa)). A compositionally biased stretch (polar residues) spans 266–280 (STTSTFNHGSSTETP). Positions 266-285 (STTSTFNHGSSTETPAENGL) are disordered. SIS domains follow at residues 393-532 (WLTE…DLVS) and 565-710 (CDKK…VDLP).

The catalysed reaction is D-fructose 6-phosphate + L-glutamine = D-glucosamine 6-phosphate + L-glutamate. It functions in the pathway nucleotide-sugar biosynthesis; UDP-N-acetyl-alpha-D-glucosamine biosynthesis; alpha-D-glucosamine 6-phosphate from D-fructose 6-phosphate: step 1/1. Its function is as follows. Involved in amino sugar synthesis (formation of chitin, supplies the amino sugars of asparagine-linked oligosaccharides of glycoproteins). This chain is Putative glutamine--fructose-6-phosphate aminotransferase [isomerizing], found in Saccharomyces cerevisiae (strain JAY291) (Baker's yeast).